The following is a 216-amino-acid chain: Small ribosomal subunit protein uS3c (216 aa).

Positions Ile43 to Glu118 constitute a KH type-2 domain.

It belongs to the universal ribosomal protein uS3 family. As to quaternary structure, part of the 30S ribosomal subunit.

Its subcellular location is the plastid. The protein is Small ribosomal subunit protein uS3c (rps3) of Cuscuta reflexa (Southern Asian dodder).